The primary structure comprises 409 residues: TAR DNA-binding protein 43 (409 aa).

2 consecutive RRM domains span residues 105–200 and 191–262; these read SDLI…RCTE and RKVF…TAEP. 2 disordered regions span residues 260 to 302 and 341 to 409; these read AEPK…NQGG and SQQN…GWGM. Over residues 261–274 the composition is skewed to basic and acidic residues; the sequence is EPKHNNNRQLERGG. Polar residues predominate over residues 281–292; it reads FGNQGYPNSRPS. Composition is skewed to low complexity over residues 341-387 and 395-409; these read SQQN…PNAG and GFSS…GWGM.

As to quaternary structure, homodimer.

The protein localises to the nucleus. It localises to the cytoplasm. Its subcellular location is the stress granule. The protein resides in the mitochondrion. Probably involved in transcriptional repression. May play a role in the maintenance of the circadian clock periodicity. The sequence is that of TAR DNA-binding protein 43 (tardbp) from Xenopus tropicalis (Western clawed frog).